We begin with the raw amino-acid sequence, 192 residues long: Orotate phosphoribosyltransferase (192 aa).

Residue 116–124 (EDIVTTGLS) coordinates 5-phospho-alpha-D-ribose 1-diphosphate. Orotate-binding residues include T120 and R148.

This sequence belongs to the purine/pyrimidine phosphoribosyltransferase family. PyrE subfamily. In terms of assembly, homodimer. The cofactor is Mg(2+).

It carries out the reaction orotidine 5'-phosphate + diphosphate = orotate + 5-phospho-alpha-D-ribose 1-diphosphate. It participates in pyrimidine metabolism; UMP biosynthesis via de novo pathway; UMP from orotate: step 1/2. Functionally, catalyzes the transfer of a ribosyl phosphate group from 5-phosphoribose 1-diphosphate to orotate, leading to the formation of orotidine monophosphate (OMP). This chain is Orotate phosphoribosyltransferase, found in Brucella canis (strain ATCC 23365 / NCTC 10854 / RM-666).